The primary structure comprises 592 residues: Arginine--tRNA ligase (592 aa).

The 'HIGH' region signature appears at 112–122 (VNPNKELHVGH).

It belongs to the class-I aminoacyl-tRNA synthetase family. Monomer.

It is found in the cytoplasm. It catalyses the reaction tRNA(Arg) + L-arginine + ATP = L-arginyl-tRNA(Arg) + AMP + diphosphate. The protein is Arginine--tRNA ligase of Thermus thermophilus (strain ATCC 27634 / DSM 579 / HB8).